A 98-amino-acid polypeptide reads, in one-letter code: DNA-binding protein Fis (98 aa).

The H-T-H motif DNA-binding region spans 74–93 (QTRAALMLGINRSTLRKKLK).

It belongs to the transcriptional regulatory Fis family. As to quaternary structure, homodimer.

Functionally, activates ribosomal RNA transcription. Plays a direct role in upstream activation of rRNA promoters. This chain is DNA-binding protein Fis, found in Buchnera aphidicola subsp. Acyrthosiphon pisum (strain 5A).